Here is a 150-residue protein sequence, read N- to C-terminus: Transcriptional repressor NrdR (150 aa).

A zinc finger lies at 3–34; the sequence is CPFCGYEDTFVIDTREIEDQRVIRRRRECPNC. The ATP-cone domain occupies 49 to 139; the sequence is IMVIKKDGRR…VYQEFSSLEE (91 aa).

This sequence belongs to the NrdR family. Zn(2+) serves as cofactor.

In terms of biological role, negatively regulates transcription of bacterial ribonucleotide reductase nrd genes and operons by binding to NrdR-boxes. The chain is Transcriptional repressor NrdR from Dictyoglomus thermophilum (strain ATCC 35947 / DSM 3960 / H-6-12).